We begin with the raw amino-acid sequence, 289 residues long: Phosphatidylglycerol--prolipoprotein diacylglyceryl transferase (289 aa).

The next 4 helical transmembrane spans lie at 18–38 (FTIYWYGVLIGLGVIIGYVMA), 54–74 (DFVMYVIPVAIIFARLYYVIF), 86–106 (VFYIWEGGLAIHGALIGGVLT), and 116–136 (LSFWQLMDVAAPSILIGQAIG). R137 provides a ligand contact to a 1,2-diacyl-sn-glycero-3-phospho-(1'-sn-glycerol). 3 helical membrane passes run 177–197 (HPTFLYESIWNFIGVVVLLLL), 205–225 (GELFFSYLIWYSIGRFFIEGM), and 236–256 (LRTAQIVSILLIVGALLLWWY).

It belongs to the Lgt family.

The protein localises to the cell membrane. It carries out the reaction L-cysteinyl-[prolipoprotein] + a 1,2-diacyl-sn-glycero-3-phospho-(1'-sn-glycerol) = an S-1,2-diacyl-sn-glyceryl-L-cysteinyl-[prolipoprotein] + sn-glycerol 1-phosphate + H(+). Its pathway is protein modification; lipoprotein biosynthesis (diacylglyceryl transfer). Its function is as follows. Catalyzes the transfer of the diacylglyceryl group from phosphatidylglycerol to the sulfhydryl group of the N-terminal cysteine of a prolipoprotein, the first step in the formation of mature lipoproteins. This Halalkalibacterium halodurans (strain ATCC BAA-125 / DSM 18197 / FERM 7344 / JCM 9153 / C-125) (Bacillus halodurans) protein is Phosphatidylglycerol--prolipoprotein diacylglyceryl transferase.